Reading from the N-terminus, the 227-residue chain is NAD(P)H-quinone oxidoreductase subunit K, chloroplastic (227 aa).

Cysteine 43, cysteine 44, cysteine 108, and cysteine 139 together coordinate [4Fe-4S] cluster.

This sequence belongs to the complex I 20 kDa subunit family. In terms of assembly, NDH is composed of at least 16 different subunits, 5 of which are encoded in the nucleus. The cofactor is [4Fe-4S] cluster.

It is found in the plastid. The protein resides in the chloroplast thylakoid membrane. It catalyses the reaction a plastoquinone + NADH + (n+1) H(+)(in) = a plastoquinol + NAD(+) + n H(+)(out). The enzyme catalyses a plastoquinone + NADPH + (n+1) H(+)(in) = a plastoquinol + NADP(+) + n H(+)(out). Functionally, NDH shuttles electrons from NAD(P)H:plastoquinone, via FMN and iron-sulfur (Fe-S) centers, to quinones in the photosynthetic chain and possibly in a chloroplast respiratory chain. The immediate electron acceptor for the enzyme in this species is believed to be plastoquinone. Couples the redox reaction to proton translocation, and thus conserves the redox energy in a proton gradient. The polypeptide is NAD(P)H-quinone oxidoreductase subunit K, chloroplastic (Spinacia oleracea (Spinach)).